A 527-amino-acid polypeptide reads, in one-letter code: UDP-glucuronosyltransferase 2A3 (527 aa).

Residues 1–23 form the signal peptide; it reads MRSDKSALVFLLLQLFCVGCGFC. At 24-491 the chain is on the extracellular side; that stretch reads GKVLVWPCDM…TWFQHYSIDV (468 aa). Asn-313 is a glycosylation site (N-linked (GlcNAc...) asparagine). A helical membrane pass occupies residues 492 to 512; sequence IGFLLACVATAIFLFTKCFLF. Over 513-527 the chain is Cytoplasmic; it reads SCQKFNKTRKIEKRE.

The protein belongs to the UDP-glycosyltransferase family.

The protein localises to the membrane. It carries out the reaction glucuronate acceptor + UDP-alpha-D-glucuronate = acceptor beta-D-glucuronoside + UDP + H(+). UDP-glucuronosyltransferases catalyze phase II biotransformation reactions in which lipophilic substrates are conjugated with glucuronic acid to increase water solubility and enhance excretion. They are of major importance in the conjugation and subsequent elimination of potentially toxic xenobiotics and endogenous compounds. The sequence is that of UDP-glucuronosyltransferase 2A3 (UGT2A3) from Homo sapiens (Human).